Reading from the N-terminus, the 113-residue chain is Antisense of depressing factor protein 1 (113 aa).

Basic residues predominate over residues 1-11 (MGKCSMKKKGV). The segment at 1-35 (MGKCSMKKKGVGKNVGVGKKVQKKRSISTAERKRT) is disordered.

Belongs to the ADF1 family.

The protein localises to the nucleus. In terms of biological role, transcriptional repressor which negatively regulates transcription of FYV5 by binding to the promoter on the sense strand. This chain is Antisense of depressing factor protein 1, found in Saccharomyces cerevisiae (strain ATCC 204508 / S288c) (Baker's yeast).